We begin with the raw amino-acid sequence, 368 residues long: Tubby-like F-box protein 2 (368 aa).

Low complexity predominate over residues 1 to 17 (MVPWRRSSSSSSAPSSR). The disordered stretch occupies residues 1–44 (MVPWRRSSSSSSAPSSRPARRPARTNARVSPDVSSELSPLAGEE). Positions 49 to 104 (ERWSALVPDLLADILRCVEAGSERWPPRRDVVACASVCRRWRDVAVAVVQPPLESG) constitute an F-box domain.

It belongs to the TUB family. In terms of tissue distribution, expressed in stems, leaves, flowers and seeds.

The polypeptide is Tubby-like F-box protein 2 (TULP2) (Oryza sativa subsp. japonica (Rice)).